We begin with the raw amino-acid sequence, 668 residues long: Tyrosine-protein phosphatase non-receptor type ptp-2 (668 aa).

2 SH2 domains span residues 10–113 (NFYY…KKPV) and 134–232 (WWHG…EEPL). The Tyrosine-protein phosphatase domain occupies 264 to 580 (ISEEFDRLSQ…QFLYKALAFY (317 aa)). Cys-518 functions as the Phosphocysteine intermediate in the catalytic mechanism. Residues 603-668 (PRRLRPTPNA…SSTLLKSTKK (66 aa)) form a disordered region. Low complexity-rich tracts occupy residues 616-634 (SSARQVTSSRPSSSASSRT) and 652-668 (STSSTSSSSTLLKSTKK).

It belongs to the protein-tyrosine phosphatase family. Non-receptor class 2 subfamily. Expressed in embryonic cells, developing vulva, body wall muscles, head neurons and gonadal sheath cells.

It localises to the cytoplasm. It carries out the reaction O-phospho-L-tyrosyl-[protein] + H2O = L-tyrosyl-[protein] + phosphate. Involved in embryonic and larval development. Plays a role in oogenesis by regulating mpk-1 phosphorylation and oocyte maturation in response to major sperm protein (MSP). During the formation of neuromuscular junctions at the larval stage, negatively regulates membrane protrusion from body wall muscles probably downstream of receptor egl-15. Plays a role in fluid homeostasis probably downstream of receptor egl-15 and adapter soc-1. Promotes vulva induction and negatively regulates fertility probably downstream of receptor let-23. Negatively regulates daf-2-mediated repression of dauer formation. This chain is Tyrosine-protein phosphatase non-receptor type ptp-2, found in Caenorhabditis elegans.